The sequence spans 666 residues: Peptidase S41 family protein phomP1' (666 aa).

The signal sequence occupies residues 1–27 (MSSFLVQTAVVRLFLLGVVFWFPFALS). N-linked (GlcNAc...) asparagine glycosylation is found at Asn-70, Asn-214, and Asn-234. Residues 303–504 (DVAVLQITSF…LLQAQGVRTV (202 aa)) form a peptidase S41 domain region. N-linked (GlcNAc...) asparagine glycans are attached at residues Asn-555 and Asn-612.

It belongs to the peptidase S41A family.

It participates in mycotoxin biosynthesis. Functionally, peptidase S41 family protein; part of the gene cluster that mediates the biosynthesis of the phomopsins, a group of hexapeptide mycotoxins which infects lupins and causes lupinosis disease in livestock. Within the pathway, phomP1 and phomP1' are probably involved in the processing of the phomA and phomA' precursors. The pathway starts with the processing of the precursor phomA by several endopeptidases including kexin proteases as well as the cluster-specific S41 family peptidase phomP1 and the oligopeptidase phomG to produce 10 identical copies of the hexapeptide Tyr-Val-Ile-Pro-Ile-Asp. After being excised from the precursor peptide, the core peptides are cyclized and modified post-translationally by enzymes encoded within the gene cluster. The timing and order of proteolysis of the phomA precursor and PTMs are still unknown. Two tyrosinase-like enzymes, phomQ1 and phomQ2, catalyze the chlorination and hydroxylation of Tyr, respectively. PhomYb, is proposed to be involved in the construction of the macrocyclic structure. The other 4 ustYa family proteins may be involved in PTMs that generate the unique structure of phomopsin A. PhomYa is required for the hydroxylation of C-beta of Tyr. PhomYc, phomYd, and phomYe are responsible for the biosynthesis of 2,3-dehydroisoleucine (dIle), 2,3-dehydroaspartic acid (dAsp), and 3,4-dehydroproline (dPro), respectively. While dIle formation by phomYc is indispensable for the installation of dAsp by phomYd, the order of the other PTMs have not been elucidated yet. Most of the biosynthetic enzymes likely have broad substrate specificity, and thus, there might be a metabolic grid from a precursor to phomopsin A. The enzyme(s) responsible for the biosynthesis of 3,4-dehydrovaline (dVal) have also not been identified yet. Finally, phomM acts as an S-adenosylmethionine-dependent alpha-N-methyltransferase that catalyzes two successive N-methylation reactions, converting N-desmethyl-phomopsin A to phomopsin A and phomopsin A further to an N,N-dimethylated congener called phomopsin E. This is Peptidase S41 family protein phomP1' from Diaporthe leptostromiformis (Lupinosis disease fungus).